The following is a 126-amino-acid chain: UPF0235 protein C15orf40 homolog (126 aa).

Residues M1 to P32 form a disordered region. S89 bears the Phosphoserine mark.

The protein belongs to the UPF0235 family.

This Mus musculus (Mouse) protein is UPF0235 protein C15orf40 homolog.